Here is a 197-residue protein sequence, read N- to C-terminus: Recombination protein RecR (197 aa).

The C4-type zinc finger occupies 57–72 (CSVCFAITEDDPCWIC). One can recognise a Toprim domain in the interval 79–174 (GTICVVEEPQ…KVTRLAHGIP (96 aa)).

The protein belongs to the RecR family.

In terms of biological role, may play a role in DNA repair. It seems to be involved in an RecBC-independent recombinational process of DNA repair. It may act with RecF and RecO. This chain is Recombination protein RecR, found in Citrifermentans bemidjiense (strain ATCC BAA-1014 / DSM 16622 / JCM 12645 / Bem) (Geobacter bemidjiensis).